A 434-amino-acid chain; its full sequence is Serine--tRNA ligase (434 aa).

Position 239 to 241 (239 to 241 (TAE)) interacts with L-serine. Residue 270–272 (RSE) participates in ATP binding. L-serine is bound at residue glutamate 293. ATP is bound at residue 357-360 (EISS). Serine 393 is an L-serine binding site.

This sequence belongs to the class-II aminoacyl-tRNA synthetase family. Type-1 seryl-tRNA synthetase subfamily. In terms of assembly, homodimer. The tRNA molecule binds across the dimer.

Its subcellular location is the cytoplasm. It carries out the reaction tRNA(Ser) + L-serine + ATP = L-seryl-tRNA(Ser) + AMP + diphosphate + H(+). The enzyme catalyses tRNA(Sec) + L-serine + ATP = L-seryl-tRNA(Sec) + AMP + diphosphate + H(+). It functions in the pathway aminoacyl-tRNA biosynthesis; selenocysteinyl-tRNA(Sec) biosynthesis; L-seryl-tRNA(Sec) from L-serine and tRNA(Sec): step 1/1. Its function is as follows. Catalyzes the attachment of serine to tRNA(Ser). Is also able to aminoacylate tRNA(Sec) with serine, to form the misacylated tRNA L-seryl-tRNA(Sec), which will be further converted into selenocysteinyl-tRNA(Sec). The polypeptide is Serine--tRNA ligase (Pseudoalteromonas translucida (strain TAC 125)).